The following is a 418-amino-acid chain: Gamma-glutamyl phosphate reductase (418 aa).

This sequence belongs to the gamma-glutamyl phosphate reductase family.

It is found in the cytoplasm. The catalysed reaction is L-glutamate 5-semialdehyde + phosphate + NADP(+) = L-glutamyl 5-phosphate + NADPH + H(+). The protein operates within amino-acid biosynthesis; L-proline biosynthesis; L-glutamate 5-semialdehyde from L-glutamate: step 2/2. Functionally, catalyzes the NADPH-dependent reduction of L-glutamate 5-phosphate into L-glutamate 5-semialdehyde and phosphate. The product spontaneously undergoes cyclization to form 1-pyrroline-5-carboxylate. This Desulfatibacillum aliphaticivorans protein is Gamma-glutamyl phosphate reductase.